A 151-amino-acid polypeptide reads, in one-letter code: NADH dehydrogenase [ubiquinone] 1 beta subcomplex subunit 11, mitochondrial (151 aa).

A mitochondrion-targeting transit peptide spans 1-29 (MAARLLSLCARRLSVTAAVRGLPAAGVRW). The disordered stretch occupies residues 39 to 62 (STVERKRQRQPTMHWQEDPESEDE). Residues 87 to 107 (VVFFFGFSIVLVLGTTFMAYL) form a helical membrane-spanning segment.

Belongs to the complex I NDUFB11 subunit family. As to quaternary structure, complex I is composed of 45 different subunits. Interacts with BCAP31.

It localises to the mitochondrion inner membrane. Accessory subunit of the mitochondrial membrane respiratory chain NADH dehydrogenase (Complex I), that is believed not to be involved in catalysis. Complex I functions in the transfer of electrons from NADH to the respiratory chain. The immediate electron acceptor for the enzyme is believed to be ubiquinone. This chain is NADH dehydrogenase [ubiquinone] 1 beta subcomplex subunit 11, mitochondrial (NDUFB11), found in Cricetulus griseus (Chinese hamster).